The following is a 334-amino-acid chain: Aspartate carbamoyltransferase catalytic subunit (334 aa).

Carbamoyl phosphate contacts are provided by Arg70 and Thr71. Lys98 is a binding site for L-aspartate. Carbamoyl phosphate is bound by residues Arg120, His150, and Gln153. L-aspartate-binding residues include Arg183 and Arg239. Carbamoyl phosphate contacts are provided by Gly280 and Pro281.

Belongs to the aspartate/ornithine carbamoyltransferase superfamily. ATCase family. Heterododecamer (2C3:3R2) of six catalytic PyrB chains organized as two trimers (C3), and six regulatory PyrI chains organized as three dimers (R2).

It carries out the reaction carbamoyl phosphate + L-aspartate = N-carbamoyl-L-aspartate + phosphate + H(+). It functions in the pathway pyrimidine metabolism; UMP biosynthesis via de novo pathway; (S)-dihydroorotate from bicarbonate: step 2/3. Its function is as follows. Catalyzes the condensation of carbamoyl phosphate and aspartate to form carbamoyl aspartate and inorganic phosphate, the committed step in the de novo pyrimidine nucleotide biosynthesis pathway. The polypeptide is Aspartate carbamoyltransferase catalytic subunit (Pseudomonas paraeruginosa (strain DSM 24068 / PA7) (Pseudomonas aeruginosa (strain PA7))).